A 130-amino-acid chain; its full sequence is MTSELGIFYRSDFDRAWCDMSAETIKFTDSAAQRVSELLAEEGDQNLKLRVYVTGGGCSGFQYGFTFDEVVNEDDTVVEKNGVSVLVDPMSLQYLQGAEIDYTENVSGSQFVIRNPNATTTCGCGSSFSV.

Residues Cys-58, Cys-122, and Cys-124 each contribute to the iron-sulfur cluster site.

Belongs to the HesB/IscA family. Homodimer. The cofactor is iron-sulfur cluster.

Its function is as follows. Required for insertion of 4Fe-4S clusters for at least IspG. The polypeptide is Iron-sulfur cluster insertion protein ErpA 2 (Methylococcus capsulatus (strain ATCC 33009 / NCIMB 11132 / Bath)).